The following is a 562-amino-acid chain: Solute carrier family 22 member 6 (562 aa).

The Cytoplasmic segment spans residues 1–15 (MPFSELLEQVGSTGR). Residues 16–36 (FQVLHVTLLCIPVLMMASHNL) traverse the membrane as a helical segment. Residues 37-147 (LQNFVATVPS…LVCDMHSFKQ (111 aa)) are Extracellular-facing. Residues 148-168 (MGQTIYMGGVLVGALLFGGLS) form a helical membrane-spanning segment. At 169 to 174 (DRYGRR) the chain is on the cytoplasmic side. The helical transmembrane segment at 175–195 (ILLLISNLLMAVSGTCAAFSS) threads the bilayer. Over 196–205 (SFSLFCVFRF) the chain is Extracellular. A helical membrane pass occupies residues 206–226 (GCGLALSGLGLNTFSLIVEWI). At 227–235 (PTRIRTAVG) the chain is on the cytoplasmic side. Residues 236-256 (TTTGYCYTLGQLILVLLAYFI) form a helical membrane-spanning segment. Residues 257–260 (RDWR) lie on the Extracellular side of the membrane. The helical transmembrane segment at 261 to 281 (WLTLAVSLPFYVFFLIAWWFH) threads the bilayer. Residues 282 to 351 (ESSRWLALSN…FNTPAMRKRT (70 aa)) are Cytoplasmic-facing. A helical membrane pass occupies residues 352 to 372 (LCLSAVWLSTSFAYYGLAMDL). At 373–378 (DKFGVD) the chain is on the extracellular side. Residues 379-399 (IYLIQVIFGAVDIPAKVVVVV) form a helical membrane-spanning segment. Over 400–408 (SMSLIGRRR) the chain is Cytoplasmic. Residues 409 to 429 (SQCAVLVVAGITILLNLLVPY) traverse the membrane as a helical segment. Topologically, residues 430 to 444 (DKQTIRTCLAVLGKG) are extracellular. The helical transmembrane segment at 445-465 (CLAASFNCCYLYSGELFPTII) threads the bilayer. Residues 466 to 468 (RQN) lie on the Cytoplasmic side of the membrane. Residues 469 to 489 (GMGWVSMMARIGAMVAPMVLL) form a helical membrane-spanning segment. Topologically, residues 490 to 495 (TRDYIP) are extracellular. The chain crosses the membrane as a helical span at residues 496-516 (WLPGLIYGGAPILSGLAAIFL). The Cytoplasmic portion of the chain corresponds to 517–562 (PETLGYPLPDTIQDVEESGSGRKSKMSTKETITLQDKQANLLKQSA).

Belongs to the major facilitator (TC 2.A.1) superfamily. Organic cation transporter (TC 2.A.1.19) family. Glycosylated. Glycosylation is necessary for proper targeting of the transporter to the plasma membrane.

It is found in the cell membrane. The protein resides in the basolateral cell membrane. The protein localises to the basal cell membrane. Functionally, involved in the renal elimination of endogenous and exogenous organic anions. Functions as organic anion exchanger when the uptake of one molecule of organic anion is coupled with an efflux of one molecule of endogenous dicarboxylic acid (glutarate, ketoglutarate, etc). Mediates the sodium-independent uptake of p-aminohippurate (PAH), 2,3-dimercapto-1-propanesulfonic acid (DMPS), cidofovir, adefovir, 9-(2-phosphonylmethoxyethyl) guanine (PMEG), 9-(2-phosphonylmethoxyethyl) diaminopurine (PMEDAP), ochratoxin (OTA), acyclovir (ACV), 3'-azido-3-'deoxythymidine (AZT), cimetidine (CMD), 2,4-dichloro-phenoxyacetate (2,4-D), hippurate (HA), indoleacetate (IA), indoxyl sulfate (IS), 3-carboxy-4-methyl-5-propyl-2-furanpropionate (CMPF) and edaravone sulfate. Mediates the sodium-independent uptake of p-aminohippurate (PAH). PAH uptake is inhibited by p-chloromercuribenzenesulphonate (PCMBS), diethyl pyrocarbonate (DEPC), indomethacin, sulindac, diclofenac, carprofen, okadaic acid, benzothiazolylcysteine (BTC), S-chlorotrifluoroethylcysteine (CTFC), cysteine S-conjugates S-dichlorovinylcysteine (DCVC), furosemide, steviol, phorbol 12-myristate 13-acetate (PMA), calcium ionophore A23187, benzylpenicillin, bumetamide, losartan, probenecid, phenol red, urate, glutarate and alpha-ketoglutarate. PAH uptake is inhibited by glutarate. This chain is Solute carrier family 22 member 6 (SLC22A6), found in Pseudopleuronectes americanus (Winter flounder).